Reading from the N-terminus, the 286-residue chain is Beta-lactamase SHV-3 (286 aa).

An N-terminal signal peptide occupies residues 1–21 (MRYIRLCIISLLATLPLAVHA). Catalysis depends on serine 66, which acts as the Acyl-ester intermediate. Cysteines 73 and 119 form a disulfide. The active-site Proton acceptor is the glutamate 164. 230–232 (KTG) is a binding site for substrate.

It belongs to the class-A beta-lactamase family.

It catalyses the reaction a beta-lactam + H2O = a substituted beta-amino acid. Functionally, this enzyme hydrolyzes cefotaxime, ceftazidime and other broad spectrum cephalosporins. The chain is Beta-lactamase SHV-3 (bla) from Klebsiella pneumoniae.